Reading from the N-terminus, the 421-residue chain is Probable sugar-binding periplasmic protein (421 aa).

An N-terminal signal peptide occupies residues 1-27 (MHKLLKLAAMGTAACALLAGMAPVANA).

The protein belongs to the bacterial solute-binding protein 1 family.

It is found in the periplasm. In terms of biological role, part of a binding-protein-dependent transport system for a sugar. The protein is Probable sugar-binding periplasmic protein of Brucella suis biovar 1 (strain 1330).